Reading from the N-terminus, the 639-residue chain is 1-deoxy-D-xylulose-5-phosphate synthase (639 aa).

Residues His-79 and 120-122 (AHS) each bind thiamine diphosphate. Mg(2+) is bound at residue Asp-151. Thiamine diphosphate-binding positions include 152 to 153 (GA), Asn-180, Tyr-289, and Glu-371. A Mg(2+)-binding site is contributed by Asn-180.

The protein belongs to the transketolase family. DXPS subfamily. Homodimer. The cofactor is Mg(2+). Thiamine diphosphate is required as a cofactor.

The enzyme catalyses D-glyceraldehyde 3-phosphate + pyruvate + H(+) = 1-deoxy-D-xylulose 5-phosphate + CO2. Its pathway is metabolic intermediate biosynthesis; 1-deoxy-D-xylulose 5-phosphate biosynthesis; 1-deoxy-D-xylulose 5-phosphate from D-glyceraldehyde 3-phosphate and pyruvate: step 1/1. Its function is as follows. Catalyzes the acyloin condensation reaction between C atoms 2 and 3 of pyruvate and glyceraldehyde 3-phosphate to yield 1-deoxy-D-xylulose-5-phosphate (DXP). The polypeptide is 1-deoxy-D-xylulose-5-phosphate synthase (Allorhizobium ampelinum (strain ATCC BAA-846 / DSM 112012 / S4) (Agrobacterium vitis (strain S4))).